We begin with the raw amino-acid sequence, 581 residues long: Proline--tRNA ligase (581 aa).

Belongs to the class-II aminoacyl-tRNA synthetase family. ProS type 1 subfamily. Homodimer.

The protein resides in the cytoplasm. It catalyses the reaction tRNA(Pro) + L-proline + ATP = L-prolyl-tRNA(Pro) + AMP + diphosphate. Catalyzes the attachment of proline to tRNA(Pro) in a two-step reaction: proline is first activated by ATP to form Pro-AMP and then transferred to the acceptor end of tRNA(Pro). As ProRS can inadvertently accommodate and process non-cognate amino acids such as alanine and cysteine, to avoid such errors it has two additional distinct editing activities against alanine. One activity is designated as 'pretransfer' editing and involves the tRNA(Pro)-independent hydrolysis of activated Ala-AMP. The other activity is designated 'posttransfer' editing and involves deacylation of mischarged Ala-tRNA(Pro). The misacylated Cys-tRNA(Pro) is not edited by ProRS. The polypeptide is Proline--tRNA ligase (Polaromonas naphthalenivorans (strain CJ2)).